The following is a 223-amino-acid chain: uncharacterized protein (223 aa).

This is an uncharacterized protein from Aquifex aeolicus (strain VF5).